The chain runs to 462 residues: UDP-N-acetylmuramoylalanine--D-glutamate ligase (462 aa).

ATP is bound at residue 117-123 (GTNGKTT).

The protein belongs to the MurCDEF family.

Its subcellular location is the cytoplasm. It carries out the reaction UDP-N-acetyl-alpha-D-muramoyl-L-alanine + D-glutamate + ATP = UDP-N-acetyl-alpha-D-muramoyl-L-alanyl-D-glutamate + ADP + phosphate + H(+). It functions in the pathway cell wall biogenesis; peptidoglycan biosynthesis. Its function is as follows. Cell wall formation. Catalyzes the addition of glutamate to the nucleotide precursor UDP-N-acetylmuramoyl-L-alanine (UMA). This is UDP-N-acetylmuramoylalanine--D-glutamate ligase from Parasynechococcus marenigrum (strain WH8102).